The following is a 182-amino-acid chain: Ribosome-recycling factor (182 aa).

The interval 137–158 is disordered; sequence KKSEKESEISEDQSRDEQDNVQ.

It belongs to the RRF family.

It is found in the cytoplasm. Its function is as follows. Responsible for the release of ribosomes from messenger RNA at the termination of protein biosynthesis. May increase the efficiency of translation by recycling ribosomes from one round of translation to another. This is Ribosome-recycling factor from Prochlorococcus marinus (strain MIT 9211).